The following is a 358-amino-acid chain: tRNA-specific 2-thiouridylase MnmA (358 aa).

Residues 7-14 (AMSGGVDS) and L33 each bind ATP. C101 acts as the Nucleophile in catalysis. C101 and C197 are disulfide-bonded. G125 contacts ATP. An interaction with tRNA region spans residues 147 to 149 (KDQ). The active-site Cysteine persulfide intermediate is C197.

The protein belongs to the MnmA/TRMU family.

Its subcellular location is the cytoplasm. The enzyme catalyses S-sulfanyl-L-cysteinyl-[protein] + uridine(34) in tRNA + AH2 + ATP = 2-thiouridine(34) in tRNA + L-cysteinyl-[protein] + A + AMP + diphosphate + H(+). In terms of biological role, catalyzes the 2-thiolation of uridine at the wobble position (U34) of tRNA, leading to the formation of s(2)U34. This is tRNA-specific 2-thiouridylase MnmA from Rickettsia typhi (strain ATCC VR-144 / Wilmington).